The following is a 378-amino-acid chain: Chaperone protein DnaJ (378 aa).

The region spanning 5–70 is the J domain; sequence DYYEVLGVAK…QKRAAYDQYG (66 aa). The CR-type zinc finger occupies 138–216; it reads GYDTQIRVPS…CHGSGKVKET (79 aa). Cys151, Cys154, Cys168, Cys171, Cys190, Cys193, Cys204, and Cys207 together coordinate Zn(2+). CXXCXGXG motif repeat units lie at residues 151 to 158, 168 to 175, 190 to 197, and 204 to 211; these read CEVCHGSG, CPTCHGQG, CPKCHGTG, and CVHCHGSG.

Belongs to the DnaJ family. Homodimer. Zn(2+) serves as cofactor.

The protein resides in the cytoplasm. In terms of biological role, participates actively in the response to hyperosmotic and heat shock by preventing the aggregation of stress-denatured proteins and by disaggregating proteins, also in an autonomous, DnaK-independent fashion. Unfolded proteins bind initially to DnaJ; upon interaction with the DnaJ-bound protein, DnaK hydrolyzes its bound ATP, resulting in the formation of a stable complex. GrpE releases ADP from DnaK; ATP binding to DnaK triggers the release of the substrate protein, thus completing the reaction cycle. Several rounds of ATP-dependent interactions between DnaJ, DnaK and GrpE are required for fully efficient folding. Also involved, together with DnaK and GrpE, in the DNA replication of plasmids through activation of initiation proteins. This is Chaperone protein DnaJ from Burkholderia lata (strain ATCC 17760 / DSM 23089 / LMG 22485 / NCIMB 9086 / R18194 / 383).